The following is a 761-amino-acid chain: Phosphoribosylformylglycinamidine synthase subunit PurL (761 aa).

The active site involves H49. Y52 and K92 together coordinate ATP. Residue E94 coordinates Mg(2+). Substrate is bound by residues 95-98 (SHNH) and R117. Catalysis depends on H96, which acts as the Proton acceptor. A Mg(2+)-binding site is contributed by D118. Q241 is a substrate binding site. D269 provides a ligand contact to Mg(2+). Residue 318-320 (ESQ) participates in substrate binding. ATP-binding residues include N502 and G539. Position 540 (N540) interacts with Mg(2+). Residue S542 coordinates substrate.

The protein belongs to the FGAMS family. Monomer. Part of the FGAM synthase complex composed of 1 PurL, 1 PurQ and 2 PurS subunits.

It localises to the cytoplasm. The catalysed reaction is N(2)-formyl-N(1)-(5-phospho-beta-D-ribosyl)glycinamide + L-glutamine + ATP + H2O = 2-formamido-N(1)-(5-O-phospho-beta-D-ribosyl)acetamidine + L-glutamate + ADP + phosphate + H(+). Its pathway is purine metabolism; IMP biosynthesis via de novo pathway; 5-amino-1-(5-phospho-D-ribosyl)imidazole from N(2)-formyl-N(1)-(5-phospho-D-ribosyl)glycinamide: step 1/2. In terms of biological role, part of the phosphoribosylformylglycinamidine synthase complex involved in the purines biosynthetic pathway. Catalyzes the ATP-dependent conversion of formylglycinamide ribonucleotide (FGAR) and glutamine to yield formylglycinamidine ribonucleotide (FGAM) and glutamate. The FGAM synthase complex is composed of three subunits. PurQ produces an ammonia molecule by converting glutamine to glutamate. PurL transfers the ammonia molecule to FGAR to form FGAM in an ATP-dependent manner. PurS interacts with PurQ and PurL and is thought to assist in the transfer of the ammonia molecule from PurQ to PurL. This is Phosphoribosylformylglycinamidine synthase subunit PurL from Chlorobium luteolum (strain DSM 273 / BCRC 81028 / 2530) (Pelodictyon luteolum).